A 418-amino-acid polypeptide reads, in one-letter code: MTPQSSPSSSRDHVCLVCQDFASGYHYGVPSCVGCKTFFRRTIMKKQKYICQFEGNCPVDKTIRCACRYCRFEKCLSVGMDRNALQQNRDPIGYTKRTRRPKKELKTTSDCSSDEGASTPPSVSPLQLSPPPISPLLFQAAPLKPRRCILQTLAEREKCANDLRLSEYLPIRSLHEALCSKALLNDTAFLEKWGQPSERHQIFDLRFVNHDDYHYWHERDWFLLTEYAKTFDVFEALDYQDKAELVRHAAITVPVLVQVWNSPDYGPDTIVFPDGAYFDRTPEPTRPAGLNRKKYQMLDLVLKPFRDLQLDATEFAAFKAVTFLNPDADISLPARKLVNNERVRITKQLYGYMAMKDDVDTAIERFARLVLMGTSMSKMACESKEAVWIADFFENIGFSAFARQLFFGDTTSVVAHKL.

The nuclear receptor DNA-binding region spans 12–87 (DHVCLVCQDF…VGMDRNALQQ (76 aa)). NR C4-type zinc fingers lie at residues 15-35 (CLVC…CVGC) and 51-70 (CQFE…CRYC). A disordered region spans residues 89-130 (RDPIGYTKRTRRPKKELKTTSDCSSDEGASTPPSVSPLQLSP). An NR LBD domain is found at 170–409 (PIRSLHEALC…AFARQLFFGD (240 aa)). Residues 398–409 (FSAFARQLFFGD) are AF-2.

The protein belongs to the nuclear hormone receptor family. As to expression, expressed in germ and intestinal cells and at low levels in the hypodermis.

Its subcellular location is the nucleus. In terms of biological role, probable transcription factor which may have a role in detoxifying dietary metabolites arising from bacterial tryptophan metabolism. Required for fertility and involved in proper postembryonic germline development, especially germline stem cell (GSC) proliferation. Required for activation of the methionine/S-adenosylmethionine (Met/SAM) cycle in response to low levels of SAM. The protein is Nuclear hormone receptor 114 of Caenorhabditis elegans.